Reading from the N-terminus, the 873-residue chain is DNA mismatch repair protein MutS (873 aa).

Residue 625-632 coordinates ATP; that stretch reads GPNMGGKS.

It belongs to the DNA mismatch repair MutS family.

This protein is involved in the repair of mismatches in DNA. It is possible that it carries out the mismatch recognition step. This protein has a weak ATPase activity. In Xanthomonas oryzae pv. oryzae (strain KACC10331 / KXO85), this protein is DNA mismatch repair protein MutS.